A 148-amino-acid chain; its full sequence is Putative pre-16S rRNA nuclease (148 aa).

This sequence belongs to the YqgF nuclease family.

It localises to the cytoplasm. Could be a nuclease involved in processing of the 5'-end of pre-16S rRNA. In Chlamydia muridarum (strain MoPn / Nigg), this protein is Putative pre-16S rRNA nuclease.